Reading from the N-terminus, the 134-residue chain is Profilin-5 (134 aa).

Belongs to the profilin family. Occurs in many kinds of cells as a complex with monomeric actin in a 1:1 ratio. In terms of tissue distribution, specifically expressed in mature pollen grains. Expressed in germinating pollen grains. Expressed in growing pollen tubes (at protein level).

Its subcellular location is the cytoplasm. The protein resides in the cytoskeleton. Binds to actin monomers and regulates the organization of the actin cytoskeleton. At high concentrations, profilin prevents the polymerization of actin, whereas it enhances it at low concentrations. At low concentrations, associates with the poly-proline motif of formins to enhance actin filament elongation rate. Acts redundantly with PRF4 to regulate apical actin polymerization at the tip of pollen tube and control polarized pollen tube growth. Functions probably by favoring formin-mediated actin polymerization at pollen tube tips. The chain is Profilin-5 from Arabidopsis thaliana (Mouse-ear cress).